The chain runs to 518 residues: Zinc finger protein 449 (518 aa).

Residues 30 to 112 (RQRFRQFQYR…SLIEDLQREL (83 aa)) form the SCAN box domain. Residues 292 to 304 (NPTLGETPENSNL) are compositionally biased toward polar residues. A disordered region spans residues 292–325 (NPTLGETPENSNLEEPLNPKPHKKKSPGEKPHRC). C2H2-type zinc fingers lie at residues 323 to 345 (HRCP…QRIH), 351 to 373 (HKCP…QRLH), 379 to 401 (YECT…QRTH), 407 to 429 (YKCL…LKTH), 435 to 457 (HRCH…QRTH), 463 to 485 (FKCN…LRIH), and 491 to 513 (YKCT…QVTH).

It belongs to the krueppel C2H2-type zinc-finger protein family.

Its subcellular location is the nucleus. Functionally, may be involved in transcriptional regulation. This Pan troglodytes (Chimpanzee) protein is Zinc finger protein 449 (ZNF449).